The primary structure comprises 322 residues: Ferredoxin--NADP reductase (322 aa).

Residues aspartate 34, glutamine 42, tyrosine 47, valine 87, phenylalanine 120, aspartate 279, and threonine 320 each contribute to the FAD site.

The protein belongs to the ferredoxin--NADP reductase type 2 family. As to quaternary structure, homodimer. The cofactor is FAD.

It carries out the reaction 2 reduced [2Fe-2S]-[ferredoxin] + NADP(+) + H(+) = 2 oxidized [2Fe-2S]-[ferredoxin] + NADPH. This is Ferredoxin--NADP reductase from Streptococcus pneumoniae (strain Hungary19A-6).